Here is a 293-residue protein sequence, read N- to C-terminus: Ribosomal RNA small subunit methyltransferase A (293 aa).

Residues Asn-33, Val-35, Gly-60, Glu-81, Asp-111, and Asn-130 each coordinate S-adenosyl-L-methionine.

It belongs to the class I-like SAM-binding methyltransferase superfamily. rRNA adenine N(6)-methyltransferase family. RsmA subfamily.

The protein localises to the cytoplasm. It carries out the reaction adenosine(1518)/adenosine(1519) in 16S rRNA + 4 S-adenosyl-L-methionine = N(6)-dimethyladenosine(1518)/N(6)-dimethyladenosine(1519) in 16S rRNA + 4 S-adenosyl-L-homocysteine + 4 H(+). In terms of biological role, specifically dimethylates two adjacent adenosines (A1518 and A1519) in the loop of a conserved hairpin near the 3'-end of 16S rRNA in the 30S particle. May play a critical role in biogenesis of 30S subunits. The polypeptide is Ribosomal RNA small subunit methyltransferase A (Corynebacterium glutamicum (strain ATCC 13032 / DSM 20300 / JCM 1318 / BCRC 11384 / CCUG 27702 / LMG 3730 / NBRC 12168 / NCIMB 10025 / NRRL B-2784 / 534)).